The chain runs to 362 residues: Atypical chemokine receptor 3 (362 aa).

Topologically, residues 1–40 are extracellular; it reads MDLHLFDYAEPGNFSDISWPCNSSDCIVVDTVLCPNMPNK. 3 N-linked (GlcNAc...) asparagine glycosylation sites follow: N13, N22, and N39. The helical transmembrane segment at 41-61 threads the bilayer; sequence SVLLYTLSFIYIFIFVIGMIA. Topologically, residues 62–81 are cytoplasmic; sequence NSVVVWVNIQAKTTGYDTHC. The helical transmembrane segment at 82-102 threads the bilayer; the sequence is YILNLAIADLWVVVTIPVWVV. The Extracellular segment spans residues 103–118; sequence SLVQHNQWPMGELTCK. A disulfide bond links C117 and C196. Residues 119–139 traverse the membrane as a helical segment; sequence ITHLIFSINLFGSIFFLTCMS. Residues 140 to 162 are Cytoplasmic-facing; sequence VDRYLSITYFASTSSRRKKVVRR. The helical transmembrane segment at 163–183 threads the bilayer; that stretch reads AVCVLVWLLAFCVSLPDTYYL. At 184-213 the chain is on the extracellular side; it reads KTVTSASNNETYCRSFYPEHSVKEWLISME. A helical membrane pass occupies residues 214-234; that stretch reads LVSVVLGFAIPFCVIAVFYCL. The Cytoplasmic portion of the chain corresponds to 235–252; sequence LARAISASSDQEKQSSRK. The helical transmembrane segment at 253–273 threads the bilayer; that stretch reads IIFSYVVVFLVCWLPYHVVVL. Residues 274-296 are Extracellular-facing; the sequence is LDIFSILHYIPFTCQLENFLFTA. Residues 297–319 traverse the membrane as a helical segment; the sequence is LHVTQCLSLVHCCVNPVLYSFIN. Residues 320–362 lie on the Cytoplasmic side of the membrane; sequence RNYRYELMKAFIFKYSAKTGLTKLIDASRVSETEYSALEQNAK. Residues 324-362 form a C-terminal cytoplasmic tail region; the sequence is YELMKAFIFKYSAKTGLTKLIDASRVSETEYSALEQNAK. Phosphoserine is present on residues S347, S350, and S355.

This sequence belongs to the G-protein coupled receptor 1 family. Atypical chemokine receptor subfamily. In terms of assembly, homodimer. Can form heterodimers with CXCR4; heterodimerization may regulate CXCR4 signaling activity. Interacts with ARRB1 and ARRB2. The Ser/Thr residues in the C-terminal cytoplasmic tail may be phosphorylated. In terms of processing, ubiquitinated at the Lys residues in its C-terminal cytoplasmic tail and is essential for correct trafficking from and to the cell membrane. Deubiquitinated by CXCL12-stimulation in a reversible manner.

The protein resides in the cell membrane. Its subcellular location is the early endosome. The protein localises to the recycling endosome. Functionally, atypical chemokine receptor that controls chemokine levels and localization via high-affinity chemokine binding that is uncoupled from classic ligand-driven signal transduction cascades, resulting instead in chemokine sequestration, degradation, or transcytosis. Also known as interceptor (internalizing receptor) or chemokine-scavenging receptor or chemokine decoy receptor. Acts as a receptor for chemokines CXCL11 and CXCL12/SDF1. Chemokine binding does not activate G-protein-mediated signal transduction but instead induces beta-arrestin recruitment, leading to ligand internalization and activation of MAPK signaling pathway. Required for regulation of CXCR4 protein levels in migrating interneurons, thereby adapting their chemokine responsiveness. In glioma cells, transduces signals via MEK/ERK pathway, mediating resistance to apoptosis. Promotes cell growth and survival. Not involved in cell migration, adhesion or proliferation of normal hematopoietic progenitors but activated by CXCL11 in malignant hemapoietic cells, leading to phosphorylation of ERK1/2 (MAPK3/MAPK1) and enhanced cell adhesion and migration. Plays a regulatory role in CXCR4-mediated activation of cell surface integrins by CXCL12. Required for heart valve development. Regulates axon guidance in the oculomotor system through the regulation of CXCL12 levels. This Canis lupus familiaris (Dog) protein is Atypical chemokine receptor 3 (ACKR3).